The following is a 230-amino-acid chain: Cytidylate kinase (230 aa).

11–19 provides a ligand contact to ATP; sequence GQSAAGKST.

It belongs to the cytidylate kinase family. Type 1 subfamily.

It localises to the cytoplasm. It catalyses the reaction CMP + ATP = CDP + ADP. It carries out the reaction dCMP + ATP = dCDP + ADP. This Chloroflexus aggregans (strain MD-66 / DSM 9485) protein is Cytidylate kinase.